Here is a 370-residue protein sequence, read N- to C-terminus: Histidinol-phosphate aminotransferase (370 aa).

N6-(pyridoxal phosphate)lysine is present on lysine 223.

This sequence belongs to the class-II pyridoxal-phosphate-dependent aminotransferase family. Histidinol-phosphate aminotransferase subfamily. Homodimer. Pyridoxal 5'-phosphate serves as cofactor.

It carries out the reaction L-histidinol phosphate + 2-oxoglutarate = 3-(imidazol-4-yl)-2-oxopropyl phosphate + L-glutamate. The protein operates within amino-acid biosynthesis; L-histidine biosynthesis; L-histidine from 5-phospho-alpha-D-ribose 1-diphosphate: step 7/9. This is Histidinol-phosphate aminotransferase from Methylobacterium nodulans (strain LMG 21967 / CNCM I-2342 / ORS 2060).